Consider the following 501-residue polypeptide: Putative ribose/galactose/methyl galactoside import ATP-binding protein 1 (501 aa).

2 ABC transporter domains span residues 5 to 237 and 249 to 492; these read VSLS…VGRQ and VPGE…MTRS. Position 37-44 (37-44) interacts with ATP; sequence GENGAGKS.

The protein belongs to the ABC transporter superfamily. Carbohydrate importer 2 (CUT2) (TC 3.A.1.2) family.

The protein resides in the cell inner membrane. It carries out the reaction D-ribose(out) + ATP + H2O = D-ribose(in) + ADP + phosphate + H(+). It catalyses the reaction D-galactose(out) + ATP + H2O = D-galactose(in) + ADP + phosphate + H(+). Part of an ABC transporter complex involved in carbohydrate import. Could be involved in ribose, galactose and/or methyl galactoside import. Responsible for energy coupling to the transport system. The polypeptide is Putative ribose/galactose/methyl galactoside import ATP-binding protein 1 (Rhizobium meliloti (strain 1021) (Ensifer meliloti)).